Here is a 545-residue protein sequence, read N- to C-terminus: CTP synthase (545 aa).

Positions 1–266 (MTHFIFVTGG…DDLICERFGF (266 aa)) are amidoligase domain. Serine 13 contributes to the CTP binding site. Serine 13 contacts UTP. Residues 14-19 (SLGKGI) and aspartate 71 each bind ATP. Aspartate 71 and glutamate 140 together coordinate Mg(2+). CTP is bound by residues 147–149 (DIE), 187–192 (KTKPTQ), and lysine 223. UTP contacts are provided by residues 187 to 192 (KTKPTQ) and lysine 223. 239 to 241 (KDA) is a binding site for ATP. Residues 292–543 (RVAMVGKYVE…IDAAKTQHQK (252 aa)) form the Glutamine amidotransferase type-1 domain. Glycine 353 provides a ligand contact to L-glutamine. Residue cysteine 380 is the Nucleophile; for glutamine hydrolysis of the active site. L-glutamine contacts are provided by residues 381–384 (LGMQ), glutamate 404, and arginine 471. Catalysis depends on residues histidine 516 and glutamate 518.

Belongs to the CTP synthase family. Homotetramer.

The catalysed reaction is UTP + L-glutamine + ATP + H2O = CTP + L-glutamate + ADP + phosphate + 2 H(+). The enzyme catalyses L-glutamine + H2O = L-glutamate + NH4(+). It catalyses the reaction UTP + NH4(+) + ATP = CTP + ADP + phosphate + 2 H(+). It participates in pyrimidine metabolism; CTP biosynthesis via de novo pathway; CTP from UDP: step 2/2. Its activity is regulated as follows. Allosterically activated by GTP, when glutamine is the substrate; GTP has no effect on the reaction when ammonia is the substrate. The allosteric effector GTP functions by stabilizing the protein conformation that binds the tetrahedral intermediate(s) formed during glutamine hydrolysis. Inhibited by the product CTP, via allosteric rather than competitive inhibition. Its function is as follows. Catalyzes the ATP-dependent amination of UTP to CTP with either L-glutamine or ammonia as the source of nitrogen. Regulates intracellular CTP levels through interactions with the four ribonucleotide triphosphates. This Acinetobacter baumannii (strain AB307-0294) protein is CTP synthase.